Consider the following 291-residue polypeptide: Ribonuclease Z (291 aa).

7 residues coordinate Zn(2+): His61, His63, Asp65, His66, His133, Asp201, and His257. The Proton acceptor role is filled by Asp65.

This sequence belongs to the RNase Z family. In terms of assembly, homodimer. The cofactor is Zn(2+).

The enzyme catalyses Endonucleolytic cleavage of RNA, removing extra 3' nucleotides from tRNA precursor, generating 3' termini of tRNAs. A 3'-hydroxy group is left at the tRNA terminus and a 5'-phosphoryl group is left at the trailer molecule.. In terms of biological role, zinc phosphodiesterase, which displays some tRNA 3'-processing endonuclease activity. Probably involved in tRNA maturation, by removing a 3'-trailer from precursor tRNA. This chain is Ribonuclease Z, found in Saccharolobus islandicus (strain Y.N.15.51 / Yellowstone #2) (Sulfolobus islandicus).